The following is a 319-amino-acid chain: MIDLSPLVRRLAGTPLAAWADSLPAELDERLTRSHGDLQRWKAALQALPALTAERIELNGRVSLSGTCHEETRAALRQALLGLSPWRKGPFELFGVLVDTEWRSDWKWQRVAPHLDLRGRRILDVGCGNGYYMWRMLGAGADCVIGIDPNWLFFCQFLALRHYLPELPAWHLPLALEDLPEKLEGFDTVFSMGVLYHRRSPIDHLLALKDCLRPGGELLLETLVVDGDVGTVLVPEDRYAQMRNVWFLPSVAALELWLRRAGFVEVRCVDVAVTSVEEQRATEWMTFQSLPDFLDPTDRGKTVEGLPAPTRAVLLARKP.

Carboxy-S-adenosyl-L-methionine is bound by residues K88, W102, K107, G126, L176–E177, M192, Y196, and R311.

This sequence belongs to the class I-like SAM-binding methyltransferase superfamily. CmoB family. As to quaternary structure, homotetramer.

It carries out the reaction carboxy-S-adenosyl-L-methionine + 5-hydroxyuridine(34) in tRNA = 5-carboxymethoxyuridine(34) in tRNA + S-adenosyl-L-homocysteine + H(+). Functionally, catalyzes carboxymethyl transfer from carboxy-S-adenosyl-L-methionine (Cx-SAM) to 5-hydroxyuridine (ho5U) to form 5-carboxymethoxyuridine (cmo5U) at position 34 in tRNAs. This chain is tRNA U34 carboxymethyltransferase, found in Azotobacter vinelandii (strain DJ / ATCC BAA-1303).